A 429-amino-acid polypeptide reads, in one-letter code: Enolase (429 aa).

(2R)-2-phosphoglycerate is bound at residue glutamine 162. Residue glutamate 204 is the Proton donor of the active site. Residues aspartate 241, glutamate 283, and aspartate 310 each coordinate Mg(2+). (2R)-2-phosphoglycerate-binding residues include lysine 335, arginine 364, serine 365, and lysine 386. The active-site Proton acceptor is the lysine 335.

This sequence belongs to the enolase family. Mg(2+) serves as cofactor.

The protein localises to the cytoplasm. It is found in the secreted. Its subcellular location is the cell surface. It carries out the reaction (2R)-2-phosphoglycerate = phosphoenolpyruvate + H2O. It participates in carbohydrate degradation; glycolysis; pyruvate from D-glyceraldehyde 3-phosphate: step 4/5. Catalyzes the reversible conversion of 2-phosphoglycerate (2-PG) into phosphoenolpyruvate (PEP). It is essential for the degradation of carbohydrates via glycolysis. The sequence is that of Enolase from Mycobacterium sp. (strain JLS).